Here is a 117-residue protein sequence, read N- to C-terminus: Large ribosomal subunit protein bL20 (117 aa).

This sequence belongs to the bacterial ribosomal protein bL20 family.

Binds directly to 23S ribosomal RNA and is necessary for the in vitro assembly process of the 50S ribosomal subunit. It is not involved in the protein synthesizing functions of that subunit. This Campylobacter fetus subsp. fetus (strain 82-40) protein is Large ribosomal subunit protein bL20.